Here is a 284-residue protein sequence, read N- to C-terminus: 4-hydroxybenzoate octaprenyltransferase (284 aa).

7 helical membrane-spanning segments follow: residues 33-53 (VIAA…LGVF), 93-113 (IGLF…MNPL), 136-156 (HIPQ…AWAA), 159-179 (GELP…TIAY), 209-229 (LIIG…GQFY), 235-252 (YYWT…QQHL), and 264-284 (AFLN…VAFW).

It belongs to the UbiA prenyltransferase family. Mg(2+) is required as a cofactor.

The protein localises to the cell inner membrane. It catalyses the reaction all-trans-octaprenyl diphosphate + 4-hydroxybenzoate = 4-hydroxy-3-(all-trans-octaprenyl)benzoate + diphosphate. Its pathway is cofactor biosynthesis; ubiquinone biosynthesis. Catalyzes the prenylation of para-hydroxybenzoate (PHB) with an all-trans polyprenyl group. Mediates the second step in the final reaction sequence of ubiquinone-8 (UQ-8) biosynthesis, which is the condensation of the polyisoprenoid side chain with PHB, generating the first membrane-bound Q intermediate 3-octaprenyl-4-hydroxybenzoate. This chain is 4-hydroxybenzoate octaprenyltransferase, found in Vibrio parahaemolyticus serotype O3:K6 (strain RIMD 2210633).